The following is a 272-amino-acid chain: MSKSTSVSTILYLRQRLQGLKIYETSDLIQHINTFDELVGEQVSVDVKIEEKTKDMILLCSLSPLLTTLTCSMVKVAASLRFPNERWLEVITKEPRAFVYHNFLALFFKICKTNEECDHLISLAKPSMARSKVRNALTGLGEESSSRTSSGTFIRSGHDKIVKEIEKRISEFTFIPQENGETLQVINYEVGQKFEPHFDGFQRIATVLMYLSDVDKGGETVFPEAKGIKSKKGVSVRPKKGDALLFWSMRPDGSRDPSSKHGKRHCLSLNLF.

Residues 1–55 (MSKSTSVSTILYLRQRLQGLKIYETSDLIQHINTFDELVGEQVSVDVKIEEKTKD) are Cytoplasmic-facing. A helical; Signal-anchor for type II membrane protein membrane pass occupies residues 56-80 (MILLCSLSPLLTTLTCSMVKVAASL). The Lumenal portion of the chain corresponds to 81–272 (RFPNERWLEV…KRHCLSLNLF (192 aa)). Residues 179 to 272 (NGETLQVINY…KRHCLSLNLF (94 aa)) enclose the Fe2OG dioxygenase domain. Residues H197, D199, and H261 each contribute to the Fe cation site.

It belongs to the P4HA family. Fe(2+) is required as a cofactor. Requires L-ascorbate as cofactor.

It localises to the endoplasmic reticulum membrane. It carries out the reaction L-prolyl-[collagen] + 2-oxoglutarate + O2 = trans-4-hydroxy-L-prolyl-[collagen] + succinate + CO2. Catalyzes the post-translational formation of 4-hydroxyproline in -Xaa-Pro-Gly- sequences in proline-rich peptide sequences of plant glycoproteins and other proteins. Hydroxyprolines are important constituent of many plant cell wall glycoproteins such as extensins, hydroxyproline-rich glycoproteins, lectins and arabinogalactan proteins. The protein is Probable prolyl 4-hydroxylase 11 of Arabidopsis thaliana (Mouse-ear cress).